We begin with the raw amino-acid sequence, 962 residues long: Glycine dehydrogenase (decarboxylating) (962 aa).

At Lys709 the chain carries N6-(pyridoxal phosphate)lysine.

Belongs to the GcvP family. As to quaternary structure, the glycine cleavage system is composed of four proteins: P, T, L and H. It depends on pyridoxal 5'-phosphate as a cofactor.

The catalysed reaction is N(6)-[(R)-lipoyl]-L-lysyl-[glycine-cleavage complex H protein] + glycine + H(+) = N(6)-[(R)-S(8)-aminomethyldihydrolipoyl]-L-lysyl-[glycine-cleavage complex H protein] + CO2. Its function is as follows. The glycine cleavage system catalyzes the degradation of glycine. The P protein binds the alpha-amino group of glycine through its pyridoxal phosphate cofactor; CO(2) is released and the remaining methylamine moiety is then transferred to the lipoamide cofactor of the H protein. The sequence is that of Glycine dehydrogenase (decarboxylating) from Shewanella baltica (strain OS155 / ATCC BAA-1091).